The following is an 886-amino-acid chain: Valine--tRNA ligase (886 aa).

Residues 43 to 53 (PYPTGRMHLGH) carry the 'HIGH' region motif. The 'KMSKS' region signature appears at 528–532 (KMSKS). K531 serves as a coordination point for ATP.

It belongs to the class-I aminoacyl-tRNA synthetase family. ValS type 2 subfamily.

The protein localises to the cytoplasm. The enzyme catalyses tRNA(Val) + L-valine + ATP = L-valyl-tRNA(Val) + AMP + diphosphate. Its function is as follows. Catalyzes the attachment of valine to tRNA(Val). As ValRS can inadvertently accommodate and process structurally similar amino acids such as threonine, to avoid such errors, it has a 'posttransfer' editing activity that hydrolyzes mischarged Thr-tRNA(Val) in a tRNA-dependent manner. The chain is Valine--tRNA ligase from Methanococcus maripaludis (strain DSM 14266 / JCM 13030 / NBRC 101832 / S2 / LL).